We begin with the raw amino-acid sequence, 317 residues long: Olfactory receptor 10AD1 (317 aa).

At Met1–Ala25 the chain is on the extracellular side. Asn4 carries N-linked (GlcNAc...) asparagine glycosylation. The helical transmembrane segment at Leu26 to Ile46 threads the bilayer. The Cytoplasmic segment spans residues Phe47 to Lys55. The helical transmembrane segment at Leu56–Thr76 threads the bilayer. At Thr77–Thr100 the chain is on the extracellular side. The cysteines at positions 98 and 190 are disulfide-linked. Residues Gln101 to Tyr121 traverse the membrane as a helical segment. The Cytoplasmic portion of the chain corresponds to Asp122–Lys140. A helical transmembrane segment spans residues Val141–Glu161. Residues Tyr162 to Trp198 are Extracellular-facing. A helical transmembrane segment spans residues Ala199–Ser218. The Cytoplasmic portion of the chain corresponds to Tyr219–Thr238. A helical membrane pass occupies residues Phe239–Ser259. Topologically, residues Tyr260–Asp272 are extracellular. The helical transmembrane segment at Lys273 to Phe293 threads the bilayer. The Cytoplasmic segment spans residues Arg294–Val317.

Belongs to the G-protein coupled receptor 1 family.

The protein localises to the cell membrane. In terms of biological role, odorant receptor. In Homo sapiens (Human), this protein is Olfactory receptor 10AD1 (OR10AD1).